A 232-amino-acid polypeptide reads, in one-letter code: Sugar fermentation stimulation protein homolog (232 aa).

It belongs to the SfsA family.

This Moorella thermoacetica (strain ATCC 39073 / JCM 9320) protein is Sugar fermentation stimulation protein homolog.